Here is a 337-residue protein sequence, read N- to C-terminus: MAKIKIGINGFGRIGRLVARVALQSDDVELVAVNDPFISTDYMTYMFKYDTVHGQWKHHEVKVKDSKTLLFGEKEVAVFGCRNPEEIPWGSVGAEYVVESTGVFTDQEKAAAHLKGGAKKVVISAPSKDAPMFVVGVNEKEYKSDINIVSNASCTTNCLAPLAKVINDKFGIVEGLMTTVHAITATQKTVDGPSSKDWRGGRAASFNIIPSSTGAAKAVGKVLPVLNGKLTGMSFRVPTVDVSVVDLTVRLEKSATYDEIKAAVKAEAEGSLKGILGYVEEDLVSTDFQGDSRSSIFDAKAGIALNGNFVKLVSWYDNEWGYSTRVVDLIRHMNSTK.

The segment at 1–151 is binding to NAD; sequence MAKIKIGING…YKSDINIVSN (151 aa). Residues 13-14, Asp35, and Arg82 contribute to the NAD(+) site; that span reads RI. Residues 152–337 form a catalytic region; that stretch reads ASCTTNCLAP…DLIRHMNSTK (186 aa). D-glyceraldehyde 3-phosphate-binding positions include 153 to 155, Thr184, 213 to 214, and Arg236; these read SCT and TG. Catalysis depends on Cys154, which acts as the Nucleophile. Asn318 provides a ligand contact to NAD(+).

The protein belongs to the glyceraldehyde-3-phosphate dehydrogenase family. In terms of assembly, homotetramer.

The protein resides in the cytoplasm. It carries out the reaction D-glyceraldehyde 3-phosphate + phosphate + NAD(+) = (2R)-3-phospho-glyceroyl phosphate + NADH + H(+). The protein operates within carbohydrate degradation; glycolysis; pyruvate from D-glyceraldehyde 3-phosphate: step 1/5. Key enzyme in glycolysis that catalyzes the first step of the pathway by converting D-glyceraldehyde 3-phosphate (G3P) into 3-phospho-D-glyceroyl phosphate. Essential for the maintenance of cellular ATP levels and carbohydrate metabolism. The sequence is that of Glyceraldehyde-3-phosphate dehydrogenase 3, cytosolic (GAPC3) from Zea mays (Maize).